The chain runs to 103 residues: Pro-glucagon (103 aa).

The protein belongs to the glucagon family.

It is found in the secreted. In terms of biological role, plays a key role in glucose metabolism and homeostasis. Regulates blood glucose by increasing gluconeogenesis and decreasing glycolysis. The sequence is that of Pro-glucagon (gcg) from Aquarana catesbeiana (American bullfrog).